The chain runs to 308 residues: MMVSSHLGSPDQAGHVDLASPADPPPPDASASHSPVDMPAPVAAAGSDRQPPIDLTAAAFFDVDNTLVQGSSAVHFGRGLAARHYFTYRDVLGFLYAQAKFQLLGKENSNDVAAGRRKALAFIEGRSVAELVALGEEIYDEIIADKIWDGTRELTQMHLDAGQQVWLITATPYELAATIARRLGLTGALGTVAESVDGIFTGRLVGEILHGTGKAHAVRSLAIREGLNLKRCTAYSDSYNDVPMLSLVGTAVAINPDARLRSLARERGWEIRDFRIARKAARIGVPSALALGAAGGALAALASRRQSR.

The disordered stretch occupies residues 1–48 (MMVSSHLGSPDQAGHVDLASPADPPPPDASASHSPVDMPAPVAAAGSD). The active-site Nucleophile is the Asp-62. Asp-62, Asp-64, and Asp-237 together coordinate Mg(2+). The active-site Proton donor is the Asp-64.

Belongs to the HAD-like hydrolase superfamily. SerB family. The cofactor is Mg(2+).

The protein is Putative hydrolase MT0526 of Mycobacterium tuberculosis (strain CDC 1551 / Oshkosh).